Consider the following 540-residue polypeptide: Protein SOSEKI 3 (540 aa).

The interval 32–123 (KKVQIVYYLS…YVLKGSELFD (92 aa)) is DIX-like oligomerization domain. 2 disordered regions span residues 147 to 201 (EPPS…DAKN) and 219 to 294 (ADAS…SSLG). Low complexity-rich tracts occupy residues 150–163 (SSRS…SSSM) and 185–194 (RSVSSSGVSP). Residues 221–244 (ASTQTDETVSGRSKTPIETFSRGV) are compositionally biased toward polar residues. The segment covering 246–256 (TDEDVSSEPET) has biased composition (acidic residues). The segment covering 280 to 292 (NSVSPPFSNSASS) has biased composition (low complexity). Residues 342-343 (CG) carry the Association to cell membranes motif. The tract at residues 412–492 (KKDAADSNAS…KNIPCTTKTH (81 aa)) is disordered. Residues 418–437 (SNASLKRSSSYNGDRASNQM) are compositionally biased toward polar residues. A compositionally biased stretch (basic and acidic residues) spans 471-482 (SEKRRDSSEDTT).

It belongs to the SOSEKI family. Homodimer. Forms long polymer filaments with other SOKs proteins polymers (e.g. SOK1, SOK2, SOK3 and SOK4) crucial for polar localization and biological activity. Binds to ANGUSTIFOLIA (AN). Expressed during embryogenesis and in roots.

The protein resides in the cell membrane. Its function is as follows. SOSEKI proteins (SOK1-5) locally interpret global polarity cues and can influence cell division orientation to coordinate cell polarization relative to body axes, probably by guiding ANGUSTIFOLIA (AN) polarized localization. This is Protein SOSEKI 3 from Arabidopsis thaliana (Mouse-ear cress).